A 442-amino-acid chain; its full sequence is UDP-glycosyltransferase 78D4 (442 aa).

Residues 322–324, 339–347, and 361–364 contribute to the UDP-alpha-D-glucose site; these read APQ, HGGWNSVLE, and FGDH.

The protein belongs to the UDP-glycosyltransferase family.

This is UDP-glycosyltransferase 78D4 (UGT78D4) from Arabidopsis thaliana (Mouse-ear cress).